A 346-amino-acid polypeptide reads, in one-letter code: Peroxidase 37 (346 aa).

The N-terminal stretch at 1-22 (MHSSLIKLGFLLLLIQVSLSHA) is a signal peptide. Pyrrolidone carboxylic acid is present on Q23. Intrachain disulfides connect C33–C113, C66–C71, C119–C323, and C199–C231. H64 functions as the Proton acceptor in the catalytic mechanism. 5 residues coordinate Ca(2+): D65, V68, G70, D72, and S74. An N-linked (GlcNAc...) asparagine glycan is attached at N79. Position 161 (P161) interacts with substrate. H192 lines the heme b pocket. Residue T193 coordinates Ca(2+). Residues N208 and N236 are each glycosylated (N-linked (GlcNAc...) asparagine). Ca(2+) is bound by residues D244, T247, and D252.

It belongs to the peroxidase family. Classical plant (class III) peroxidase subfamily. Requires heme b as cofactor. Ca(2+) is required as a cofactor.

It is found in the secreted. It localises to the vacuole. It catalyses the reaction 2 a phenolic donor + H2O2 = 2 a phenolic radical donor + 2 H2O. Functionally, removal of H(2)O(2), oxidation of toxic reductants, biosynthesis and degradation of lignin, suberization, auxin catabolism, response to environmental stresses such as wounding, pathogen attack and oxidative stress. These functions might be dependent on each isozyme/isoform in each plant tissue. The protein is Peroxidase 37 (PER37) of Arabidopsis thaliana (Mouse-ear cress).